A 614-amino-acid polypeptide reads, in one-letter code: Threonine--tRNA ligase (614 aa).

The tract at residues 1–138 (MRILTIHARK…PLSELSKTIR (138 aa)) is editing domain. 2 catalytic regions span residues 195 to 492 (NRVN…PYIP) and 196 to 492 (RVND…PYIP). Zn(2+) is bound by residues Cys-289, His-340, and His-461.

Belongs to the class-II aminoacyl-tRNA synthetase family. Homodimer. Zn(2+) serves as cofactor.

The protein localises to the cytoplasm. It carries out the reaction tRNA(Thr) + L-threonine + ATP = L-threonyl-tRNA(Thr) + AMP + diphosphate + H(+). Its function is as follows. Catalyzes the attachment of threonine to tRNA(Thr) in a two-step reaction: L-threonine is first activated by ATP to form Thr-AMP and then transferred to the acceptor end of tRNA(Thr). Also edits incorrectly charged L-seryl-tRNA(Thr). This chain is Threonine--tRNA ligase, found in Staphylothermus marinus (strain ATCC 43588 / DSM 3639 / JCM 9404 / F1).